The primary structure comprises 516 residues: ADP-ribosylation factor GTPase-activating protein 3 (516 aa).

One can recognise an Arf-GAP domain in the interval leucine 10–arginine 126. The C4-type zinc-finger motif lies at cysteine 25–cysteine 48. A disordered region spans residues alanine 170–glycine 199. The segment covering serine 173–glycine 190 has biased composition (polar residues). Serine 231 bears the Phosphoserine mark. A coiled-coil region spans residues asparagine 243 to alanine 264. Serine 270, serine 274, serine 331, and serine 370 each carry phosphoserine. The interval threonine 393–alanine 417 is disordered. Phosphoserine is present on residues serine 428, serine 451, serine 453, serine 455, serine 457, and serine 458.

The protein resides in the cytoplasm. The protein localises to the golgi apparatus membrane. GAP activity stimulated by phosphatidylinositol 4,5-bisphosphate (PIP2). In terms of biological role, GTPase-activating protein (GAP) for ADP ribosylation factor 1 (ARF1). Hydrolysis of ARF1-bound GTP may lead to dissociation of coatomer from Golgi-derived membranes to allow fusion with target membranes. The protein is ADP-ribosylation factor GTPase-activating protein 3 of Pongo abelii (Sumatran orangutan).